A 43-amino-acid polypeptide reads, in one-letter code: Potassium channel toxin gamma-KTx 4.12 (43 aa).

Cystine bridges form between C5/C23, C11/C34, C20/C39, and C24/C41.

In terms of tissue distribution, expressed by the venom gland.

The protein resides in the secreted. Functionally, reversibly blocks Kv11/ERG potassium channels. Is less toxic than ergtoxin (AC Q86QT3). This is Potassium channel toxin gamma-KTx 4.12 from Centruroides sculpturatus (Arizona bark scorpion).